The following is a 673-amino-acid chain: DNA ligase (673 aa).

NAD(+)-binding positions include 38–42 (DSVYD), 87–88 (SL), and glutamate 119. Lysine 121 serves as the catalytic N6-AMP-lysine intermediate. NAD(+) is bound by residues arginine 142, glutamate 179, lysine 296, and lysine 320. Positions 414, 417, 432, and 438 each coordinate Zn(2+). Positions 595–673 (VVKSEIAGKT…EEAFLKLLKS (79 aa)) constitute a BRCT domain.

This sequence belongs to the NAD-dependent DNA ligase family. LigA subfamily. Requires Mg(2+) as cofactor. It depends on Mn(2+) as a cofactor.

The catalysed reaction is NAD(+) + (deoxyribonucleotide)n-3'-hydroxyl + 5'-phospho-(deoxyribonucleotide)m = (deoxyribonucleotide)n+m + AMP + beta-nicotinamide D-nucleotide.. Functionally, DNA ligase that catalyzes the formation of phosphodiester linkages between 5'-phosphoryl and 3'-hydroxyl groups in double-stranded DNA using NAD as a coenzyme and as the energy source for the reaction. It is essential for DNA replication and repair of damaged DNA. The protein is DNA ligase of Coxiella burnetii (strain CbuK_Q154) (Coxiella burnetii (strain Q154)).